The following is a 292-amino-acid chain: Protease HtpX homolog (292 aa).

2 helical membrane-spanning segments follow: residues 9-29 (TGVLMAFLTGLLMAIGYVLGN) and 31-51 (TGMMFAFMFALVMNFFSYWYS). Residue H133 coordinates Zn(2+). Residue E134 is part of the active site. H137 serves as a coordination point for Zn(2+). 2 helical membrane-spanning segments follow: residues 148 to 168 (LAAVMAGAIMMVARWAGWMLW) and 185 to 205 (LGAILLIVLAPIAAMLIQMAI). Position 210 (E210) interacts with Zn(2+).

This sequence belongs to the peptidase M48B family. Requires Zn(2+) as cofactor.

The protein localises to the cell membrane. The protein is Protease HtpX homolog of Thermococcus sibiricus (strain DSM 12597 / MM 739).